Consider the following 145-residue polypeptide: Class I hydrophobin 1 (145 aa).

The N-terminal stretch at 1 to 19 (MKFSYAIAAVVAAAASVQA) is a signal peptide. 4 disulfides stabilise this stretch: cysteine 65–cysteine 126, cysteine 72–cysteine 120, cysteine 73–cysteine 106, and cysteine 127–cysteine 140. N-linked (GlcNAc...) asparagine glycans are attached at residues asparagine 80 and asparagine 129.

This sequence belongs to the fungal hydrophobin family. Self-assembles to form functional amyloid fibrils called rodlets. Self-assembly into fibrillar rodlets occurs spontaneously at hydrophobic:hydrophilic interfaces and the rodlets further associate laterally to form amphipathic monolayers.

The protein resides in the secreted. It is found in the cell wall. Aerial growth, conidiation, and dispersal of filamentous fungi in the environment rely upon a capability of their secreting small amphipathic proteins called hydrophobins (HPBs) with low sequence identity. Class I can self-assemble into an outermost layer of rodlet bundles on aerial cell surfaces, conferring cellular hydrophobicity that supports fungal growth, development and dispersal; whereas Class II form highly ordered films at water-air interfaces through intermolecular interactions but contribute nothing to the rodlet structure. Hyd1 is a class I hydrophobin that is crucial for the initiation of primordia formation. Plays also important roles in nitrogen regulation and resistance to abiotic stresses. This Ganoderma lucidum (Ling zhi medicinal fungus) protein is Class I hydrophobin 1.